The chain runs to 371 residues: Phosphate acyltransferase (371 aa).

This sequence belongs to the PlsX family. Homodimer. Probably interacts with PlsY.

The protein resides in the cytoplasm. It catalyses the reaction a fatty acyl-[ACP] + phosphate = an acyl phosphate + holo-[ACP]. It functions in the pathway lipid metabolism; phospholipid metabolism. Functionally, catalyzes the reversible formation of acyl-phosphate (acyl-PO(4)) from acyl-[acyl-carrier-protein] (acyl-ACP). This enzyme utilizes acyl-ACP as fatty acyl donor, but not acyl-CoA. The chain is Phosphate acyltransferase from Polaromonas sp. (strain JS666 / ATCC BAA-500).